The chain runs to 1187 residues: DENN domain and WD repeat-containing protein SCD1 (1187 aa).

Residues 19 to 179 (TVDGDLGFHG…NVPLPTPGKD (161 aa)) form the uDENN domain. The cDENN domain maps to 199–330 (SLPQADISLQ…EFSTLRNDIL (132 aa)). In terms of domain architecture, dDENN spans 332-437 (LLHPNVVAID…ERRLSSDEKS (106 aa)). Disordered regions lie at residues 508 to 536 (SGAL…SSME) and 765 to 793 (SAGL…GRSW). The segment covering 526-536 (NTKEDNFSSME) has biased composition (basic and acidic residues). Positions 779 to 793 (SDETQQPSEASGRSW) are enriched in polar residues. WD repeat units follow at residues 841–892 (GHGG…SELR), 897–934 (GHTG…LLEE), 937–975 (GHDS…CVAT), 978–1017 (RCSS…QMHK), 1020–1057 (GHTK…CDAV), 1060–1099 (CHAG…IKCV), 1104–1141 (LHSS…GTKV), and 1152–1187 (RTAA…TINI).

As to quaternary structure, interacts with FLS2. Expressed in roots, rosette and cauline leaves, buds and flowers.

The protein localises to the cell membrane. The protein resides in the cytoplasmic vesicle. It is found in the clathrin-coated vesicle. In terms of biological role, involved in growth and development through its role in cytokinesis and polarized cell expansion. Required for plasma membrane internalization. May function in clathrin-mediated membrane trafficking, including plasma membrane endocytosis, essential to both cytokinesis and cell expansion. Acts as a negative regulator of basal resistance against bacteria. The protein is DENN domain and WD repeat-containing protein SCD1 of Arabidopsis thaliana (Mouse-ear cress).